A 165-amino-acid polypeptide reads, in one-letter code: Myosin regulatory light chain 2B, cardiac muscle isoform (165 aa).

Residue alanine 2 is modified to N,N,N-trimethylalanine. EF-hand domains follow at residues 23 to 58, 93 to 128, and 129 to 164; these read TQIQEFKEAFTIMDQNRDGFIDKADLRDTFAALGRL, DPEETILNAFKIFDPEGKGHIKADYIKEMLMTQEGR, and FSQEEINQMFAAFPPDVSGNLDYKNLCYVITHGEEK. Aspartate 36, asparagine 38, aspartate 40, and aspartate 47 together coordinate Ca(2+).

As to quaternary structure, myosin is a hexamer of 2 heavy chains and 4 light chains. In terms of processing, the N-terminus is blocked. N,N,N-trimethylalanine, found in other myosin light chains would not have been detected in the N-terminal tryptic peptide in PubMed:7319048 because it would remain trimethylated and ninhydrin negative after hydrolysis.

This is Myosin regulatory light chain 2B, cardiac muscle isoform from Gallus gallus (Chicken).